The chain runs to 194 residues: Acireductone dioxygenase 1 (194 aa).

The interval 1–21 (MEAWYMDDSADDQRKPHHRSP) is disordered. Residues His87, His89, Glu93, and His132 each coordinate Fe(2+). Ni(2+) contacts are provided by His87, His89, Glu93, and His132.

This sequence belongs to the acireductone dioxygenase (ARD) family. Fe(2+) serves as cofactor. Ni(2+) is required as a cofactor.

It is found in the cytoplasm. Its subcellular location is the nucleus. It catalyses the reaction 1,2-dihydroxy-5-(methylsulfanyl)pent-1-en-3-one + O2 = 4-methylsulfanyl-2-oxobutanoate + formate + 2 H(+). The enzyme catalyses 1,2-dihydroxy-5-(methylsulfanyl)pent-1-en-3-one + O2 = 3-(methylsulfanyl)propanoate + CO + formate + 2 H(+). Its pathway is amino-acid biosynthesis; L-methionine biosynthesis via salvage pathway; L-methionine from S-methyl-5-thio-alpha-D-ribose 1-phosphate: step 5/6. Its function is as follows. Catalyzes 2 different reactions between oxygen and the acireductone 1,2-dihydroxy-3-keto-5-methylthiopentene (DHK-MTPene) depending upon the metal bound in the active site. Fe-containing acireductone dioxygenase (Fe-ARD) produces formate and 2-keto-4-methylthiobutyrate (KMTB), the alpha-ketoacid precursor of methionine in the methionine recycle pathway. Ni-containing acireductone dioxygenase (Ni-ARD) produces methylthiopropionate, carbon monoxide and formate, and does not lie on the methionine recycle pathway. The chain is Acireductone dioxygenase 1 from Physcomitrium patens (Spreading-leaved earth moss).